The sequence spans 310 residues: Prostate androgen-regulated mucin-like protein 1 homolog (310 aa).

A signal peptide spans 1-20 (MVYKTLFALCILTAGWRVQS). At 21–258 (LPTSAPLSVS…EVEHALSSGS (238 aa)) the chain is on the extracellular side. Residues 40–74 (TIWTSSPQNTDADTASPSNGTHNNSVLPVTASAPT) show a composition bias toward polar residues. The interval 40–224 (TIWTSSPQNT…VPQEKTPPTT (185 aa)) is disordered. N-linked (GlcNAc...) asparagine glycans are attached at residues asparagine 58, asparagine 62, and asparagine 80. A compositionally biased stretch (polar residues) spans 92-103 (SPGSNWEGTNTD). Low complexity predominate over residues 150 to 209 (SPQAPASSPSSLSTSPPEVFSVSVTTNHSSTVTSTQPTGAPTAPESPTEESSSDHTPTSH). Asparagine 176 carries N-linked (GlcNAc...) asparagine glycosylation. Residues 259 to 279 (IAAITVTVIAVVLLVFGVAAY) traverse the membrane as a helical segment. The Cytoplasmic segment spans residues 280-310 (LKIRHSSYGRLLDDHDYGSWGNYNNPLYDDS). The residue at position 298 (serine 298) is a Phosphoserine.

This sequence belongs to the PARM family. In terms of processing, highly N-glycosylated and O-glycosylated.

The protein localises to the cell membrane. It is found in the golgi apparatus membrane. Its subcellular location is the endosome membrane. May regulate TLP1 expression and telomerase activity, thus enabling certain prostatic cells to resist apoptosis. This chain is Prostate androgen-regulated mucin-like protein 1 homolog (PARM1), found in Pongo abelii (Sumatran orangutan).